A 438-amino-acid polypeptide reads, in one-letter code: Glutamate-1-semialdehyde 2,1-aminomutase (438 aa).

Residue lysine 272 is modified to N6-(pyridoxal phosphate)lysine.

Belongs to the class-III pyridoxal-phosphate-dependent aminotransferase family. HemL subfamily. As to quaternary structure, homodimer. The cofactor is pyridoxal 5'-phosphate.

The protein localises to the cytoplasm. The enzyme catalyses (S)-4-amino-5-oxopentanoate = 5-aminolevulinate. The protein operates within porphyrin-containing compound metabolism; protoporphyrin-IX biosynthesis; 5-aminolevulinate from L-glutamyl-tRNA(Glu): step 2/2. It participates in porphyrin-containing compound metabolism; chlorophyll biosynthesis. This chain is Glutamate-1-semialdehyde 2,1-aminomutase, found in Chloroflexus aggregans (strain MD-66 / DSM 9485).